A 347-amino-acid polypeptide reads, in one-letter code: NADH-ubiquinone oxidoreductase chain 2 (347 aa).

11 helical membrane-spanning segments follow: residues 3–23 (PPILFTILLTVISGTMIVLMS), 25–45 (HWLMIWIGFEMNTLAIIPILM), 59–79 (YFLTQATASMILMMGITINLM), 96–116 (TMMTIALAMKLGLAPFHFWVP), 122–142 (VHMSSGLILLTWQKIAPLLVL), 149–169 (IDPNLLLPMAMMSVLIGGWGG), 178–198 (ILAYSSIAHMGWMATITLYNP), 200–220 (MMLLNLTIYIIMTLTTFMLFM), 242–262 (SLILMLMLSLGGLPPLSGFIP), 274–294 (EMIIMPTLLAITALLNLYFYM), and 323–343 (MILLPPLTVISTMLLPITPLL).

The protein belongs to the complex I subunit 2 family. Core subunit of respiratory chain NADH dehydrogenase (Complex I) which is composed of 45 different subunits. Interacts with TMEM242.

It localises to the mitochondrion inner membrane. The enzyme catalyses a ubiquinone + NADH + 5 H(+)(in) = a ubiquinol + NAD(+) + 4 H(+)(out). Core subunit of the mitochondrial membrane respiratory chain NADH dehydrogenase (Complex I) that is believed to belong to the minimal assembly required for catalysis. Complex I functions in the transfer of electrons from NADH to the respiratory chain. The immediate electron acceptor for the enzyme is believed to be ubiquinone. The sequence is that of NADH-ubiquinone oxidoreductase chain 2 from Suricata suricatta (Meerkat).